Reading from the N-terminus, the 504-residue chain is Acetylcholine receptor subunit epsilon (504 aa).

Residues 1–19 form the signal peptide; sequence MESGVRILSLLILLHNSLA. Residues 20–240 are Extracellular-facing; it reads SESEESRLIK…IVFNLIIQRK (221 aa). Residues Asn88 and Asn161 are each glycosylated (N-linked (GlcNAc...) asparagine). Residues Cys148 and Cys162 are joined by a disulfide bond. The chain crosses the membrane as a helical span at residues 241-265; the sequence is PLFYIINIIVPCVLISFLVVLVYFL. Over 266-273 the chain is Cytoplasmic; it reads PAKAGGQK. A helical transmembrane segment spans residues 274–292; sequence CTVSISVLLAQTVFLFLIA. The Extracellular segment spans residues 293 to 307; sequence QMVPETSLSVPLIGK. The helical transmembrane segment at 308-329 threads the bilayer; sequence YLMFVMFVSTLIVLSCVIVLNV. The Cytoplasmic portion of the chain corresponds to 330 to 473; it reads SLRSPSTHNL…WILIGKVLDV (144 aa). The helical transmembrane segment at 474–497 threads the bilayer; sequence LCFWVALPLFVLGTLAIFLMGHFN. Residues 498–504 lie on the Extracellular side of the membrane; it reads TAPEHPF.

Belongs to the ligand-gated ion channel (TC 1.A.9) family. Acetylcholine receptor (TC 1.A.9.1) subfamily. Epsilon/CHRNE sub-subfamily. As to quaternary structure, pentamer of two alpha chains, and one each of the beta, delta, and gamma (in immature muscle) or epsilon (in mature muscle) chains.

The protein localises to the postsynaptic cell membrane. It localises to the cell membrane. The catalysed reaction is K(+)(in) = K(+)(out). The enzyme catalyses Na(+)(in) = Na(+)(out). After binding acetylcholine, the AChR responds by an extensive change in conformation that affects all subunits and leads to opening of an ion-conducting channel across the plasma membrane. The polypeptide is Acetylcholine receptor subunit epsilon (chrne) (Xenopus laevis (African clawed frog)).